Here is a 98-residue protein sequence, read N- to C-terminus: Late cornified envelope-like proline-rich protein 1 (98 aa).

Residues 1–26 (MSSDDKSKSNDPKTEPKNCDPKCEQK) are disordered.

This sequence belongs to the cornifin (SPRR) family.

The chain is Late cornified envelope-like proline-rich protein 1 (LELP1) from Homo sapiens (Human).